The primary structure comprises 58 residues: Ribosome modulation factor (58 aa).

The tract at residues 1-28 (MKRQKRDRFERAHTQGFKAGLHGRSKDN) is disordered.

Belongs to the ribosome modulation factor family.

The protein localises to the cytoplasm. Its function is as follows. During stationary phase, converts 70S ribosomes to an inactive dimeric form (100S ribosomes). The chain is Ribosome modulation factor from Idiomarina loihiensis (strain ATCC BAA-735 / DSM 15497 / L2-TR).